A 471-amino-acid chain; its full sequence is Mitochondrial distribution and morphology protein 10 (471 aa).

The disordered stretch occupies residues 429–455; sequence PSSFSSPSRAANSTPAGGGQSVGGGIS. Over residues 444–455 the composition is skewed to gly residues; sequence AGGGQSVGGGIS.

The protein belongs to the MDM10 family. As to quaternary structure, component of the ER-mitochondria encounter structure (ERMES) or MDM complex, composed of mmm1, mdm10, mdm12 and mdm34. Associates with the mitochondrial outer membrane sorting assembly machinery SAM(core) complex.

It localises to the mitochondrion outer membrane. Component of the ERMES/MDM complex, which serves as a molecular tether to connect the endoplasmic reticulum and mitochondria. Components of this complex are involved in the control of mitochondrial shape and protein biogenesis and may function in phospholipid exchange. mdm10 is involved in the late assembly steps of the general translocase of the mitochondrial outer membrane (TOM complex). Functions in the tom40-specific route of the assembly of outer membrane beta-barrel proteins, including the association of tom40 with the receptor tom22 and small TOM proteins. Can associate with the SAM(core) complex as well as the mdm12-mmm1 complex, both involved in late steps of the major beta-barrel assembly pathway, that is responsible for biogenesis of all outer membrane beta-barrel proteins. May act as a switch that shuttles between both complexes and channels precursor proteins into the tom40-specific pathway. Plays a role in mitochondrial morphology and in the inheritance of mitochondria. This Aspergillus fumigatus (strain ATCC MYA-4609 / CBS 101355 / FGSC A1100 / Af293) (Neosartorya fumigata) protein is Mitochondrial distribution and morphology protein 10 (mdmB).